Reading from the N-terminus, the 150-residue chain is 3-dehydroquinate dehydratase (150 aa).

Tyr26 (proton acceptor) is an active-site residue. Residues Asn77, His83, and Asp90 each contribute to the substrate site. Residue His103 is the Proton donor of the active site. Substrate is bound by residues 104–105 (LS) and Arg114.

The protein belongs to the type-II 3-dehydroquinase family. Homododecamer.

The enzyme catalyses 3-dehydroquinate = 3-dehydroshikimate + H2O. It participates in metabolic intermediate biosynthesis; chorismate biosynthesis; chorismate from D-erythrose 4-phosphate and phosphoenolpyruvate: step 3/7. In terms of biological role, catalyzes a trans-dehydration via an enolate intermediate. This chain is 3-dehydroquinate dehydratase, found in Photorhabdus laumondii subsp. laumondii (strain DSM 15139 / CIP 105565 / TT01) (Photorhabdus luminescens subsp. laumondii).